The following is a 312-amino-acid chain: Ribosomal RNA small subunit methyltransferase H (312 aa).

S-adenosyl-L-methionine-binding positions include 34-36 (AGH), aspartate 54, phenylalanine 81, aspartate 102, and glutamine 109.

Belongs to the methyltransferase superfamily. RsmH family.

The protein resides in the cytoplasm. It catalyses the reaction cytidine(1402) in 16S rRNA + S-adenosyl-L-methionine = N(4)-methylcytidine(1402) in 16S rRNA + S-adenosyl-L-homocysteine + H(+). Functionally, specifically methylates the N4 position of cytidine in position 1402 (C1402) of 16S rRNA. This chain is Ribosomal RNA small subunit methyltransferase H, found in Geotalea daltonii (strain DSM 22248 / JCM 15807 / FRC-32) (Geobacter daltonii).